Reading from the N-terminus, the 35-residue chain is Mu-theraphotoxin-Hhn1a (35 aa).

Cystine bridges form between cysteine 2/cysteine 17, cysteine 9/cysteine 24, and cysteine 16/cysteine 31.

It belongs to the neurotoxin 10 (Hwtx-1) family. 22 (Htx-4) subfamily. In terms of assembly, monomer. As to expression, expressed by the venom gland.

It is found in the secreted. Functionally, inhibits selectively tetrodotoxin-sensitive voltage-gated sodium channels (Nav). Does not act by binding to receptor site 3 to slow the inactivation kinetics of sodium currents. This chain is Mu-theraphotoxin-Hhn1a, found in Cyriopagopus hainanus (Chinese bird spider).